The chain runs to 255 residues: 1-acyl-sn-glycerol-3-phosphate acyltransferase (255 aa).

Residues 78–83 (HVSWLD) carry the HXXXXD motif motif.

This sequence belongs to the 1-acyl-sn-glycerol-3-phosphate acyltransferase family.

The protein resides in the cell inner membrane. It catalyses the reaction a 1-acyl-sn-glycero-3-phosphate + an acyl-CoA = a 1,2-diacyl-sn-glycero-3-phosphate + CoA. It functions in the pathway phospholipid metabolism; CDP-diacylglycerol biosynthesis; CDP-diacylglycerol from sn-glycerol 3-phosphate: step 2/3. Functionally, converts lysophosphatidic acid (LPA) into phosphatidic acid by incorporating acyl moiety at the 2 position. This chain is 1-acyl-sn-glycerol-3-phosphate acyltransferase (plsC), found in Neisseria gonorrhoeae.